The chain runs to 663 residues: UvrABC system protein B (663 aa).

Residues 1–10 are compositionally biased toward basic and acidic residues; the sequence is MIDKRDDKPF. Residues 1-23 are disordered; sequence MIDKRDDKPFKLKSKYKPSGDQP. The Helicase ATP-binding domain occupies 31 to 418; sequence DNIEGGEKAQ…TNTIIEQIIR (388 aa). ATP is bound at residue 44 to 51; it reads GATGTGKT. The Beta-hairpin signature appears at 97-120; the sequence is YYDYYQPEAYVPSSDTYIEKDSSV. The region spanning 435-601 is the Helicase C-terminal domain; the sequence is QMDDLLGEIN…TIKKDIRGLI (167 aa). The UVR domain occupies 627-662; the sequence is KEAINALQKQMQEAAELLDFELAAQMRDLILELKLM.

This sequence belongs to the UvrB family. Forms a heterotetramer with UvrA during the search for lesions. Interacts with UvrC in an incision complex.

The protein resides in the cytoplasm. Functionally, the UvrABC repair system catalyzes the recognition and processing of DNA lesions. A damage recognition complex composed of 2 UvrA and 2 UvrB subunits scans DNA for abnormalities. Upon binding of the UvrA(2)B(2) complex to a putative damaged site, the DNA wraps around one UvrB monomer. DNA wrap is dependent on ATP binding by UvrB and probably causes local melting of the DNA helix, facilitating insertion of UvrB beta-hairpin between the DNA strands. Then UvrB probes one DNA strand for the presence of a lesion. If a lesion is found the UvrA subunits dissociate and the UvrB-DNA preincision complex is formed. This complex is subsequently bound by UvrC and the second UvrB is released. If no lesion is found, the DNA wraps around the other UvrB subunit that will check the other stand for damage. In Streptococcus pyogenes serotype M6 (strain ATCC BAA-946 / MGAS10394), this protein is UvrABC system protein B.